A 214-amino-acid polypeptide reads, in one-letter code: uncharacterized protein (214 aa).

Positions 1-24 are cleaved as a signal peptide; that stretch reads MVTPHGILLLTITAAASLLWITFA. The interval 99 to 121 is disordered; it reads APNDTQEQNSTRNKRDSESYTAT. Polar residues predominate over residues 100–109; it reads PNDTQEQNST.

Component of the acid-insoluble and acid-soluble organic matrix of the aragonitic skeleton (at protein level).

The protein resides in the secreted. This is an uncharacterized protein from Acropora millepora (Staghorn coral).